The sequence spans 422 residues: MLKLIVKNGYVIDPSQNLEGEFDILVENGKIKKIDKNILVPEAEIIDAKGLIVCPGFIDIHVHLRDPGQTYKEDIESGSRCAVAGGFTTIVCMPNTNPPIDNTTVVNYILQKSKSVGLCRVLPTGTITKGRKGKEIADFYSLKEAGCVAFTDDGSPVMDSSVMRKALELASQLGVPIMDHCEDDKLAYGVINEGEVSALLGLSSRAPEAEEIQIARDGILAQRTGGHVHIQHVSTKLSLEIIEFFKEKGVKITCEVNPNHLLFTEREVLNSGANARVNPPLRKKEDRLALIEGVKRGIIDCFATDHAPHQTFEKELVEFAMPGIIGLQTALPSALELYRKGIISLKKLIEMFTINPARIIGVDLGTLKLGSPADITIFDPNKEWILNEETNLSKSRNTPLWGKVLKGKVIYTIKDGKMVYKD.

2 residues coordinate Zn(2+): His-61 and His-63. Residues 63–65 (HLR) and Asn-95 each bind substrate. Asp-153 lines the Zn(2+) pocket. Asn-278 contributes to the substrate binding site. Residue Asp-305 coordinates Zn(2+). Asp-305 is an active-site residue. Substrate contacts are provided by residues His-309 and 322–323 (PG).

Belongs to the metallo-dependent hydrolases superfamily. DHOase family. Class I DHOase subfamily. As to quaternary structure, monomer. Forms a 1:1 stoichiometric complex with PyrB. The complex exists as an equilibrium mixture of heterohexamers, composed of 3 PyrC and 3 PyrB subunits, and dodecamers. The complex has both DHOase and ATCase activities. The cofactor is Zn(2+).

The catalysed reaction is (S)-dihydroorotate + H2O = N-carbamoyl-L-aspartate + H(+). Its pathway is pyrimidine metabolism; UMP biosynthesis via de novo pathway; (S)-dihydroorotate from bicarbonate: step 3/3. The monomer has very low activity by itself. Activated several thousandfold by formation of a complex with PyrB aspartate carbamoyltransferase (ATCase). Its function is as follows. Catalyzes the reversible cyclization of carbamoyl aspartate to dihydroorotate. In Aquifex aeolicus (strain VF5), this protein is Dihydroorotase.